The primary structure comprises 425 residues: Trigger factor (425 aa).

Positions 163 to 248 (GDTAVIDFEG…VHEIKTKELP (86 aa)) constitute a PPIase FKBP-type domain.

It belongs to the FKBP-type PPIase family. Tig subfamily.

Its subcellular location is the cytoplasm. It catalyses the reaction [protein]-peptidylproline (omega=180) = [protein]-peptidylproline (omega=0). In terms of biological role, involved in protein export. Acts as a chaperone by maintaining the newly synthesized protein in an open conformation. Functions as a peptidyl-prolyl cis-trans isomerase. This Bacillus anthracis (strain A0248) protein is Trigger factor.